Reading from the N-terminus, the 397-residue chain is 1-deoxy-D-xylulose 5-phosphate reductoisomerase (397 aa).

Positions 10, 11, 12, 13, 36, 37, and 124 each coordinate NADPH. Lys125 is a 1-deoxy-D-xylulose 5-phosphate binding site. An NADPH-binding site is contributed by Glu126. Asp150 is a binding site for Mn(2+). Residues Ser151, Glu152, Ser186, and His209 each coordinate 1-deoxy-D-xylulose 5-phosphate. Residue Glu152 coordinates Mn(2+). Gly215 contributes to the NADPH binding site. Residues Ser222, Asn227, Lys228, and Glu231 each contribute to the 1-deoxy-D-xylulose 5-phosphate site. Position 231 (Glu231) interacts with Mn(2+).

This sequence belongs to the DXR family. Mg(2+) is required as a cofactor. Mn(2+) serves as cofactor.

The catalysed reaction is 2-C-methyl-D-erythritol 4-phosphate + NADP(+) = 1-deoxy-D-xylulose 5-phosphate + NADPH + H(+). Its pathway is isoprenoid biosynthesis; isopentenyl diphosphate biosynthesis via DXP pathway; isopentenyl diphosphate from 1-deoxy-D-xylulose 5-phosphate: step 1/6. Functionally, catalyzes the NADPH-dependent rearrangement and reduction of 1-deoxy-D-xylulose-5-phosphate (DXP) to 2-C-methyl-D-erythritol 4-phosphate (MEP). This chain is 1-deoxy-D-xylulose 5-phosphate reductoisomerase, found in Aeromonas salmonicida (strain A449).